A 218-amino-acid polypeptide reads, in one-letter code: Oocyte-specific homeobox protein 7 (218 aa).

Polar residues predominate over residues Ser-40–Ser-72. The tract at residues Ser-40–Leu-77 is disordered. The homeobox DNA-binding region spans Phe-94–Asn-153.

The protein belongs to the paired homeobox family. Obox subfamily. Specifically expressed in oocytes and early embryos.

The protein localises to the nucleus. In terms of biological role, transcription factor required for zygotic genome activation (ZGA), a critical event in early embryonic development during which the developmental control passes from maternally provided mRNAs to the expression of the zygotic genome after fertilization. Together with other Obox family members, required in early two-cell stage embryos to kick-start the major ZGA wave by facilitating RNA Polymerase II 'pre-configuration', during which RNA Polymerase II relocates from the initial one-cell stage binding targets to ZGA gene promoters and distal enhancers. Mechanistically, promotes recruitment of RNA Polymerase II from (CG-rich) non-ZGA genes to (CG-poor) ZGA genes at the two-cell stage. Binds to regulatory DNA sequences containing a 5'-ACNCCTTTAATCCCAG-3' sequence motif. Most maternal and zygotic Obox family proteins can compensate for one another. The chain is Oocyte-specific homeobox protein 7 from Mus musculus (Mouse).